The following is a 625-amino-acid chain: Alpha-protein kinase vwkA (625 aa).

Over residues 1-15 (MESKYVLSTEKESKT) the composition is skewed to basic and acidic residues. Positions 1-64 (MESKYVLSTE…GLSSGGSKTH (64 aa)) are disordered. 2 stretches are compositionally biased toward polar residues: residues 25 to 39 (DMDSISNSLSKTSLG) and 46 to 63 (SLKTDASRSGLSSGGSKT). Positions 87–114 (TKDSITLAKEKEKKIEKRNEEIKLTFKA) form a coiled coil. In terms of domain architecture, VWFA spans 122–322 (DLLFIVDCTG…KMNERIFISI (201 aa)). Positions 386–600 (TCLSSSYEMK…HCKKLGLTIP (215 aa)) constitute an Alpha-type protein kinase domain. 570–576 (GSCNLGK) is a binding site for ATP. A disordered region spans residues 602–625 (FTSSSSTSSSSRSTSSSSSISYSY).

It belongs to the protein kinase superfamily. Alpha-type protein kinase family. ALPK subfamily. Interacts with calmodulin; in the presence of calcium. In terms of processing, autophosphorylated, in vitro.

The protein resides in the cytoplasm. The protein localises to the cytosol. Its subcellular location is the perinuclear region. It is found in the contractile vacuole membrane. The catalysed reaction is L-seryl-[protein] + ATP = O-phospho-L-seryl-[protein] + ADP + H(+). It catalyses the reaction L-threonyl-[protein] + ATP = O-phospho-L-threonyl-[protein] + ADP + H(+). Autophosphorylation activity enhanced by calcium/calmodulin. Displays a modest preference for threonine over serine residues. Does not phosphorylate myosin II, however can phosphorylate MBP, in vitro. May be involved in the regulation of myosin II function during cytokinesis. Overexpression leads to impaired cell proliferation in suspension culture and fails to develop beyond the mound stage. Both overexpression and absence of the gene can result in defects in cytokinesis and alterations in myosin II abundance and assembly. The polypeptide is Alpha-protein kinase vwkA (vwkA) (Dictyostelium discoideum (Social amoeba)).